The sequence spans 606 residues: Ribonucleoprotein PTB-binding 1 (606 aa).

The disordered stretch occupies residues 1–41; it reads MAADVSVTHRPPLSPKSGAEVEAGDAAERRAPEEELPPLDP. A2 is modified (N-acetylalanine). 2 positions are modified to phosphoserine: S6 and S14. The short motif at 45–60 is the Nuclear localization signal element; sequence RKRLEHTERQFRNRRK. 3 consecutive RRM domains span residues 59–130, 132–210, and 221–299; these read RKIL…LQPT, ALLC…WTDA, and RCLC…FCAP. The tract at residues 307-395 is interaction with PTBP1; it reads LAALIAAQAT…QTQGQKKPGI (89 aa). The disordered stretch occupies residues 391–474; it reads KKPGILGDSP…PPAPVGLRGS (84 aa). Low complexity predominate over residues 453-462; sequence LGLGPPAAQL. Residue T463 is modified to Phosphothreonine. S474 bears the Phosphoserine mark. P488 is modified (phosphothreonine). Residues 519-564 are disordered; the sequence is GLLGLSPGPNGHSHLLKVRAGGGDMQGWEAPAPQRPLTRPALPSVS. Residues S562 and H567 each carry the phosphoserine modification. Positions 579 to 606 are disordered; the sequence is CPRPSPAQKAAMWASTPRASAATTRTPT. A compositionally biased stretch (low complexity) spans 592–606; sequence ASTPRASAATTRTPT.

In terms of assembly, interacts with PTBP1, RAVER2, VCL and ACTN1. Part of a complex containing RAVER1, VCL and ACTN1.

It localises to the nucleus. It is found in the cytoplasm. In terms of biological role, cooperates with PTBP1 to modulate regulated alternative splicing events. Promotes exon skipping. Cooperates with PTBP1 to modulate switching between mutually exclusive exons during maturation of the TPM1 pre-mRNA. The protein is Ribonucleoprotein PTB-binding 1 (RAVER1) of Homo sapiens (Human).